The primary structure comprises 213 residues: Large ribosomal subunit protein uL18c (213 aa).

This sequence belongs to the universal ribosomal protein uL18 family.

Its subcellular location is the plastid. The protein resides in the apicoplast. This is Large ribosomal subunit protein uL18c (RPL18) from Plasmodium falciparum (isolate 3D7).